Consider the following 328-residue polypeptide: MTKRIAITAGEPASIGPDLVITLAQQAWPAELVVCANPELLLARAAKLGLPLRLIPYHSENKPQPQAAGTLTIAPFELAAEVECGVLNELNSAYVVDTLRFAGEKNMSREFDAVVTGPVHKGIINQAGIAFSGHTEYFAVQANCQDVVMMLAAPGLQVALMTTHIPLAYVAKAITRERLHHIIHILHKELKSKFGLGSPKIYVCGLNPHAGEDGHIGREELDVMIPALNELRAQGIQLVGPLPADTLFQPKYLQDADVILAMYHDQGLPVLKSLGFGKSVNITLGLPYIRTSVDHGTALELAGTGLADSGSFTCALNKAIELASKVSN.

Residues His-134 and Thr-135 each contribute to the substrate site. The a divalent metal cation site is built by His-164, His-209, and His-264. Lys-272, Asn-281, and Arg-290 together coordinate substrate.

This sequence belongs to the PdxA family. Homodimer. Zn(2+) serves as cofactor. It depends on Mg(2+) as a cofactor. Requires Co(2+) as cofactor.

Its subcellular location is the cytoplasm. The catalysed reaction is 4-(phosphooxy)-L-threonine + NAD(+) = 3-amino-2-oxopropyl phosphate + CO2 + NADH. The protein operates within cofactor biosynthesis; pyridoxine 5'-phosphate biosynthesis; pyridoxine 5'-phosphate from D-erythrose 4-phosphate: step 4/5. Its function is as follows. Catalyzes the NAD(P)-dependent oxidation of 4-(phosphooxy)-L-threonine (HTP) into 2-amino-3-oxo-4-(phosphooxy)butyric acid which spontaneously decarboxylates to form 3-amino-2-oxopropyl phosphate (AHAP). The chain is 4-hydroxythreonine-4-phosphate dehydrogenase from Shewanella denitrificans (strain OS217 / ATCC BAA-1090 / DSM 15013).